We begin with the raw amino-acid sequence, 149 residues long: Large ribosomal subunit protein bL9 (149 aa).

It belongs to the bacterial ribosomal protein bL9 family.

Binds to the 23S rRNA. This Xylella fastidiosa (strain 9a5c) protein is Large ribosomal subunit protein bL9.